A 657-amino-acid chain; its full sequence is Autophagy-related protein 22 (657 aa).

Residues 1–15 (MAPNLQPQPQSQLQR) show a composition bias toward low complexity. The tract at residues 1-78 (MAPNLQPQPQ…VVPRHFGHDA (78 aa)) is disordered. The Cytoplasmic segment spans residues 1 to 91 (MAPNLQPQPQ…SRRELLGWYA (91 aa)). Polar residues predominate over residues 26–40 (GLSNISKRSFRSCAT). The chain crosses the membrane as a helical span at residues 92-112 (YAFAAETYVICGIASFIPILL). At 113–155 (ETLARENGVLVSDRKTPCGSSDSKNDGDGQCIVWVFGMEINTA) the chain is on the vacuolar side. The chain crosses the membrane as a helical span at residues 156 to 176 (SFAMYTFSVSVLVQALLVVSI). Residues 177–187 (SCAADHGNYRK) lie on the Cytoplasmic side of the membrane. Residues 188–208 (KLLLTFAWIGSFAVMSYIFIT) form a helical membrane-spanning segment. Topologically, residues 209–212 (KDNY) are vacuolar. A helical transmembrane segment spans residues 213–233 (ILGALLTVISNTSFGASFVLL). Residues 234–317 (NSFLPLLVRY…ELELSTRISA (84 aa)) lie on the Cytoplasmic side of the membrane. Residues 318–338 (IGIGTGYIAALFLQCICIGVL) traverse the membrane as a helical segment. The Vacuolar segment spans residues 339 to 349 (ISLHNTTWGQR). The N-linked (GlcNAc...) asparagine glycan is linked to Asn343. A helical membrane pass occupies residues 350–370 (VVLFMVGVWWTVFTIPAAMWL). At 371 to 384 (RPRPGPPLADNGRK) the chain is on the cytoplasmic side. The helical transmembrane segment at 385-405 (GIMAGLAYILYAWKSLFKTIQ) threads the bilayer. Residues 406–409 (QARR) lie on the Vacuolar side of the membrane. Residues 410 to 430 (LLDIVLFLAGWFLLSDAIATT) traverse the membrane as a helical segment. The Cytoplasmic segment spans residues 431–446 (SSTAILFAKTQLHMKP). Residues 447–467 (WALGMINVISTTAGVFGAFGW) traverse the membrane as a helical segment. The Vacuolar portion of the chain corresponds to 468 to 481 (SWVSRLFNLKAHQT). A helical membrane pass occupies residues 482–502 (ILVCIALFELIPLYGLLGYLP). The Cytoplasmic segment spans residues 503–515 (FVKNWGVFGLQQP). The chain crosses the membrane as a helical span at residues 516–536 (WEMYPLAAVYGVVLGGLSGYC). Over 537–554 (RSLYGELIPPGSEAAFYA) the chain is Vacuolar. The helical transmembrane segment at 555-575 (LYAITDKGSSVFGPTIVGAII) threads the bilayer. The Cytoplasmic portion of the chain corresponds to 576-583 (DRTGTIRP). The helical transmembrane segment at 584 to 604 (AFWFLAVLVGFPAPLIWFIDV) threads the bilayer. At 605–657 (ERGRREGAKLAKSITDSIVQEEDESDDGAERRGMLSDYEREHGQSIDDERAGR) the chain is on the vacuolar side. Residues 615–657 (AKSITDSIVQEEDESDDGAERRGMLSDYEREHGQSIDDERAGR) form a disordered region. A compositionally biased stretch (basic and acidic residues) spans 632-657 (GAERRGMLSDYEREHGQSIDDERAGR).

It belongs to the ATG22 family.

It is found in the vacuole membrane. Functionally, vacuolar effluxer which mediate the efflux of leucine and other amino acids resulting from autophagic degradation. The release of autophagic amino acids allows the maintenance of protein synthesis and viability during nitrogen starvation. Autophagy is required for proper vegetative growth, asexual/sexual reproduction, and full virulence. Autophagy is particularly involved in the biosynthesis of deoxynivalenol (DON), an important virulence determinant. The sequence is that of Autophagy-related protein 22 from Gibberella zeae (strain ATCC MYA-4620 / CBS 123657 / FGSC 9075 / NRRL 31084 / PH-1) (Wheat head blight fungus).